Reading from the N-terminus, the 304-residue chain is Putative S-adenosyl-L-methionine-dependent methyltransferase Mmcs_1043 (304 aa).

S-adenosyl-L-methionine-binding positions include Asp130 and 159–160; that span reads DL.

This sequence belongs to the UPF0677 family.

Exhibits S-adenosyl-L-methionine-dependent methyltransferase activity. This is Putative S-adenosyl-L-methionine-dependent methyltransferase Mmcs_1043 from Mycobacterium sp. (strain MCS).